The primary structure comprises 311 residues: MAGKMKLFSVTSERPLATKIADYLDIPLCEVELQKFSDGEVKINIEESIRGTNAYVVQSMNSNVNERLMELLIMVDALKRASVHSINIIMPYYGYARQDRKARSREPITAKLMANLIQRAGADRLITVDLHAAQIQGFFNIPIDHLSAIPLIGDYLIENYGEKDVVVVAPDHSGVVRARRIADRLNAPIAILNRKPRPHEDEIMSVIGDVKGKVAIVVDDIIDTGVRATTSADILLEKGAVEVIACATHSVMAGNATERLQNSNIKEVITSDSIDLPEDKQFDKLTTISIGRILGRAIEGVQENRSLHPLF.

ATP-binding positions include 38-40 (DGE) and 97-98 (RQ). 2 residues coordinate Mg(2+): His131 and Asp171. D-ribose 5-phosphate is bound at residue Asp219.

The protein belongs to the ribose-phosphate pyrophosphokinase family. Class I subfamily. In terms of assembly, homohexamer. It depends on Mg(2+) as a cofactor.

The protein resides in the cytoplasm. It carries out the reaction D-ribose 5-phosphate + ATP = 5-phospho-alpha-D-ribose 1-diphosphate + AMP + H(+). Its pathway is metabolic intermediate biosynthesis; 5-phospho-alpha-D-ribose 1-diphosphate biosynthesis; 5-phospho-alpha-D-ribose 1-diphosphate from D-ribose 5-phosphate (route I): step 1/1. Functionally, involved in the biosynthesis of the central metabolite phospho-alpha-D-ribosyl-1-pyrophosphate (PRPP) via the transfer of pyrophosphoryl group from ATP to 1-hydroxyl of ribose-5-phosphate (Rib-5-P). The chain is Putative ribose-phosphate pyrophosphokinase 2 from Listeria monocytogenes serotype 4b (strain F2365).